The following is a 352-amino-acid chain: Chorismate synthase (352 aa).

R48 and R54 together coordinate NADP(+). FMN contacts are provided by residues 125 to 127, 238 to 239, G278, 293 to 297, and R319; these read RSS, NA, and KPTSS.

The protein belongs to the chorismate synthase family. In terms of assembly, homotetramer. FMNH2 is required as a cofactor.

The catalysed reaction is 5-O-(1-carboxyvinyl)-3-phosphoshikimate = chorismate + phosphate. Its pathway is metabolic intermediate biosynthesis; chorismate biosynthesis; chorismate from D-erythrose 4-phosphate and phosphoenolpyruvate: step 7/7. Its function is as follows. Catalyzes the anti-1,4-elimination of the C-3 phosphate and the C-6 proR hydrogen from 5-enolpyruvylshikimate-3-phosphate (EPSP) to yield chorismate, which is the branch point compound that serves as the starting substrate for the three terminal pathways of aromatic amino acid biosynthesis. This reaction introduces a second double bond into the aromatic ring system. The sequence is that of Chorismate synthase from Bordetella petrii (strain ATCC BAA-461 / DSM 12804 / CCUG 43448).